A 479-amino-acid polypeptide reads, in one-letter code: Probable glycine dehydrogenase (decarboxylating) subunit 2 (479 aa).

K265 carries the post-translational modification N6-(pyridoxal phosphate)lysine.

The protein belongs to the GcvP family. C-terminal subunit subfamily. In terms of assembly, the glycine cleavage system is composed of four proteins: P, T, L and H. In this organism, the P 'protein' is a heterodimer of two subunits. The cofactor is pyridoxal 5'-phosphate.

It carries out the reaction N(6)-[(R)-lipoyl]-L-lysyl-[glycine-cleavage complex H protein] + glycine + H(+) = N(6)-[(R)-S(8)-aminomethyldihydrolipoyl]-L-lysyl-[glycine-cleavage complex H protein] + CO2. Functionally, the glycine cleavage system catalyzes the degradation of glycine. The P protein binds the alpha-amino group of glycine through its pyridoxal phosphate cofactor; CO(2) is released and the remaining methylamine moiety is then transferred to the lipoamide cofactor of the H protein. In Pseudothermotoga lettingae (strain ATCC BAA-301 / DSM 14385 / NBRC 107922 / TMO) (Thermotoga lettingae), this protein is Probable glycine dehydrogenase (decarboxylating) subunit 2.